The chain runs to 492 residues: 2,3-bisphosphoglycerate-independent phosphoglycerate mutase (492 aa).

Positions 11 and 61 each coordinate Mn(2+). Catalysis depends on Ser61, which acts as the Phosphoserine intermediate. Substrate is bound by residues His118, 147-148, Arg178, Arg184, 248-251, and Lys320; these read RD and RNDR. Mn(2+)-binding residues include Asp386, His390, Asp427, His428, and His445.

It belongs to the BPG-independent phosphoglycerate mutase family. Monomer. The cofactor is Mn(2+).

It catalyses the reaction (2R)-2-phosphoglycerate = (2R)-3-phosphoglycerate. The protein operates within carbohydrate degradation; glycolysis; pyruvate from D-glyceraldehyde 3-phosphate: step 3/5. Functionally, catalyzes the interconversion of 2-phosphoglycerate and 3-phosphoglycerate. The protein is 2,3-bisphosphoglycerate-independent phosphoglycerate mutase of Campylobacter jejuni subsp. jejuni serotype O:2 (strain ATCC 700819 / NCTC 11168).